The primary structure comprises 434 residues: Glutamyl-tRNA reductase (434 aa).

Residues 49–52 (TCNR), S107, 112–114 (EPQ), and Q118 contribute to the substrate site. Catalysis depends on C50, which acts as the Nucleophile. 187–192 (GAGETV) contributes to the NADP(+) binding site.

Belongs to the glutamyl-tRNA reductase family. As to quaternary structure, homodimer.

The enzyme catalyses (S)-4-amino-5-oxopentanoate + tRNA(Glu) + NADP(+) = L-glutamyl-tRNA(Glu) + NADPH + H(+). It functions in the pathway porphyrin-containing compound metabolism; protoporphyrin-IX biosynthesis; 5-aminolevulinate from L-glutamyl-tRNA(Glu): step 1/2. Catalyzes the NADPH-dependent reduction of glutamyl-tRNA(Glu) to glutamate 1-semialdehyde (GSA). The sequence is that of Glutamyl-tRNA reductase from Hydrogenovibrio crunogenus (strain DSM 25203 / XCL-2) (Thiomicrospira crunogena).